Here is a 126-residue protein sequence, read N- to C-terminus: Protein ApaG (126 aa).

In terms of domain architecture, ApaG spans 2–126; that stretch reads SDPRYQIDVS…FRLAVPGALH (125 aa).

The chain is Protein ApaG from Pseudomonas putida (strain W619).